The sequence spans 506 residues: Zinc finger protein MAGPIE (506 aa).

Residues 1–53 form a disordered region; that stretch reads MTTEDQTISSSGGYVQSSSTTDHVDHHHHDQHESLNPPLVKKKRNLPGNPDPE. Low complexity predominate over residues 9-21; that stretch reads SSSGGYVQSSSTT. The segment covering 22–33 has biased composition (basic and acidic residues); it reads DHVDHHHHDQHE. S60 is modified (phosphoserine). C2H2-type zinc fingers lie at residues 70-92 and 111-141; these read FLCEICGKGFQRDQNLQLHRRGH and YVCPEKSCVHHHPTRALGDLTGIKKHFCRKH. The Nuclear localization signal signature appears at 133 to 140; sequence IKKHFCRK. The C2H2-type 2; degenerate zinc-finger motif lies at 146–169; it reads WKCEKCAKRYAVQSDWKAHSKTCG. The Zn(2+) site is built by C148, C151, H164, C168, C175, C177, H190, and C194. A CCHC-type 2; atypical zinc finger spans residues 173–196; it reads YRCDCGTIFSRRDSFITHRAFCDA. The segment at 183–195 is SHR-binding; that stretch reads RRDSFITHRAFCD.

As to quaternary structure, interacts with SHR, SCR and JKD, but not with itself. Interacts with SIEL. Binds to RGA and SCL3 competitively in the nucleus. Expressed in the ground tissue and stele cells of embryos and 2-days post-germination roots but not in the quiescent center. Detected only in cells that perform asymmetric cell divisions. In roots, present in cortex, endodermis, and pericycle layer.

It is found in the nucleus. In terms of biological role, transcription factor that regulates tissue boundaries and asymmetric cell division. Contributes to the sequestration of 'SHORT-ROOT' to the nucleus. Interacts with the SCR and MGP promoters. Does not show transcription activity by itself, but regulates the transcription of downstream genes through interaction with other transcription factors. Binds DNA via its zinc fingers. Recognizes and binds to SCL3 promoter sequence 5'-AGACAA-3' to promote its expression when in complex with RGA. Positively involved in gibberellic acid (GA) signaling. This chain is Zinc finger protein MAGPIE, found in Arabidopsis thaliana (Mouse-ear cress).